A 116-amino-acid polypeptide reads, in one-letter code: Large ribosomal subunit protein bL20 (116 aa).

It belongs to the bacterial ribosomal protein bL20 family.

In terms of biological role, binds directly to 23S ribosomal RNA and is necessary for the in vitro assembly process of the 50S ribosomal subunit. It is not involved in the protein synthesizing functions of that subunit. The polypeptide is Large ribosomal subunit protein bL20 (Mycoplasmopsis synoviae (strain 53) (Mycoplasma synoviae)).